We begin with the raw amino-acid sequence, 98 residues long: Putative pterin-4-alpha-carbinolamine dehydratase (98 aa).

It belongs to the pterin-4-alpha-carbinolamine dehydratase family.

The catalysed reaction is (4aS,6R)-4a-hydroxy-L-erythro-5,6,7,8-tetrahydrobiopterin = (6R)-L-erythro-6,7-dihydrobiopterin + H2O. The chain is Putative pterin-4-alpha-carbinolamine dehydratase from Mesorhizobium japonicum (strain LMG 29417 / CECT 9101 / MAFF 303099) (Mesorhizobium loti (strain MAFF 303099)).